Reading from the N-terminus, the 512-residue chain is Alpha-amylase (512 aa).

The N-terminal stretch at 1–15 (MKLFVLIALFGLGFA) is a signal peptide. Disulfide bonds link cysteine 43-cysteine 101, cysteine 85-cysteine 130, and cysteine 156-cysteine 175. Ca(2+)-binding residues include asparagine 115, arginine 173, and aspartate 182. A chloride-binding site is contributed by arginine 210. Aspartate 212 acts as the Nucleophile in catalysis. Histidine 216 is a Ca(2+) binding site. The active-site Proton donor is the glutamate 248. Position 352 (arginine 352) interacts with chloride. 2 cysteine pairs are disulfide-bonded: cysteine 394–cysteine 400 and cysteine 466–cysteine 478. Asparagine 496 carries an N-linked (GlcNAc...) asparagine glycan.

The protein belongs to the glycosyl hydrolase 13 family. Requires Ca(2+) as cofactor. Chloride serves as cofactor.

The protein localises to the secreted. The catalysed reaction is Endohydrolysis of (1-&gt;4)-alpha-D-glucosidic linkages in polysaccharides containing three or more (1-&gt;4)-alpha-linked D-glucose units.. Catalyzes the hydrolysis of alpha-1,4 glycosidic linkages in starch, glycogen and similar oligosaccharides. The sequence is that of Alpha-amylase from Oryzias latipes (Japanese rice fish).